The chain runs to 352 residues: Photosystem II D2 protein (352 aa).

The chain crosses the membrane as a helical span at residues 40-60; sequence CAYMALGGWLTGTTFVTSWYT. Position 117 (His-117) interacts with chlorophyll a. Residues 124-140 traverse the membrane as a helical segment; it reads GFMLRQFEIARLVGIRP. Positions 129 and 142 each coordinate pheophytin a. A helical membrane pass occupies residues 152-165; that stretch reads VFVSVFLMYPLGQS. His-197 contributes to the chlorophyll a binding site. Residues 207–227 traverse the membrane as a helical segment; sequence GALLCAIHGATVENTLFEDGD. Residues His-214 and Phe-261 each contribute to the a plastoquinone site. Residue His-214 coordinates Fe cation. Residue His-268 coordinates Fe cation. A helical transmembrane segment spans residues 278 to 294; sequence GLWTSSIGIIGLALNLR.

This sequence belongs to the reaction center PufL/M/PsbA/D family. PSII is composed of 1 copy each of membrane proteins PsbA, PsbB, PsbC, PsbD, PsbE, PsbF, PsbH, PsbI, PsbJ, PsbK, PsbL, PsbM, PsbT, PsbX, PsbY, PsbZ, Psb30/Ycf12, peripheral proteins PsbO, CyanoQ (PsbQ), PsbU, PsbV and a large number of cofactors. It forms dimeric complexes. The D1/D2 heterodimer binds P680, chlorophylls that are the primary electron donor of PSII, and subsequent electron acceptors. It shares a non-heme iron and each subunit binds pheophytin, quinone, additional chlorophylls, carotenoids and lipids. There is also a Cl(-1) ion associated with D1 and D2, which is required for oxygen evolution. The PSII complex binds additional chlorophylls, carotenoids and specific lipids. is required as a cofactor.

Its subcellular location is the cellular thylakoid membrane. The enzyme catalyses 2 a plastoquinone + 4 hnu + 2 H2O = 2 a plastoquinol + O2. Photosystem II (PSII) is a light-driven water:plastoquinone oxidoreductase that uses light energy to abstract electrons from H(2)O, generating O(2) and a proton gradient subsequently used for ATP formation. It consists of a core antenna complex that captures photons, and an electron transfer chain that converts photonic excitation into a charge separation. The D1/D2 (PsbA/PsbD) reaction center heterodimer binds P680, the primary electron donor of PSII as well as several subsequent electron acceptors. D2 is needed for assembly of a stable PSII complex. The sequence is that of Photosystem II D2 protein from Synechococcus sp. (strain RCC307).